The following is a 256-amino-acid chain: 5-oxoprolinase subunit A 2 (256 aa).

This sequence belongs to the LamB/PxpA family. As to quaternary structure, forms a complex composed of PxpA, PxpB and PxpC.

The catalysed reaction is 5-oxo-L-proline + ATP + 2 H2O = L-glutamate + ADP + phosphate + H(+). Catalyzes the cleavage of 5-oxoproline to form L-glutamate coupled to the hydrolysis of ATP to ADP and inorganic phosphate. This Bradyrhizobium diazoefficiens (strain JCM 10833 / BCRC 13528 / IAM 13628 / NBRC 14792 / USDA 110) protein is 5-oxoprolinase subunit A 2.